The sequence spans 76 residues: uncharacterized protein (76 aa).

Residues L12–S32 traverse the membrane as a helical segment.

The protein resides in the cell membrane. This is an uncharacterized protein from Escherichia coli O157:H7.